A 674-amino-acid chain; its full sequence is Acyl-coenzyme A oxidase acox-1.1 (674 aa).

Residues 149 to 152, 157 to 158, and Gly191 each bind FAD; these read YAQT and GT. Substrate is bound by residues 285–288 and Arg295; that span reads KINY. Residues Arg320 and 340–343 each bind FAD; that span reads QQHR. Positions 342, 392, 396, and 404 each coordinate ATP. Gly411 serves as a coordination point for FAD. 433-434 is a binding site for substrate; it reads YE. The active-site Proton acceptor is Glu434. An FAD-binding site is contributed by Glu436. Residues 533 to 536 and Tyr581 contribute to the ATP site; that span reads RASR. The short motif at 672–674 is the Microbody targeting signal element; that stretch reads SKL.

The protein belongs to the acyl-CoA oxidase family. As to quaternary structure, homodimer. Forms a heterodimer with acox-1.2. Forms a heterodimer with acox-1.3; the interaction may be important for the stability of acox-1.3. It depends on FAD as a cofactor. In terms of tissue distribution, expressed in hypodermis and intestine.

It is found in the peroxisome. The enzyme catalyses nonanoyl-CoA + O2 = (2E)-nonenoyl-CoA + H2O2. It carries out the reaction dodecanoyl-CoA + O2 = (2E)-dodecenoyl-CoA + H2O2. It catalyses the reaction a 2,3-saturated acyl-CoA + O2 = a (2E)-enoyl-CoA + H2O2. The catalysed reaction is heptanoyl-CoA + O2 = (2E)-heptenoyl-CoA + H2O2. The enzyme catalyses (8R)-8-hydroxynonanoyl-CoA + O2 = (2E,8R)-8-hydroxynonenoyl-CoA + H2O2. It carries out the reaction pentanoyl-CoA + O2 = (2E)-pentenoyl-CoA + H2O2. It catalyses the reaction hexadecanoyl-CoA + O2 = (2E)-hexadecenoyl-CoA + H2O2. The catalysed reaction is IC-asc-C7-CoA + O2 = IC-asc-DeltaC7-CoA + H2O2. The enzyme catalyses IC-asc-C9-CoA + O2 = IC-asc-DeltaC9-CoA + H2O2. It carries out the reaction asc-omegaC5-CoA + O2 = asc-omegaDeltaC5-CoA + H2O2. It catalyses the reaction asc-C7-CoA + O2 = asc-DeltaC7-CoA + H2O2. The catalysed reaction is asc-omegaC7-CoA + O2 = asc-omegaDeltaC7-CoA + H2O2. The enzyme catalyses asc-C9-CoA + O2 = asc-DeltaC9-CoA + H2O2. It carries out the reaction asc-C13-CoA + O2 = asc-DeltaC13-CoA + H2O2. Its pathway is lipid metabolism; peroxisomal fatty acid beta-oxidation. With respect to regulation, activated by ATP. ATP binding leads to a conformational change that promotes FAD cofactor binding and enzyme activity. ATP binding likely occurs during acox-1.1 folding and/or dimer formation. Involved in the first step of peroxisomal beta-oxidation by catalyzing the desaturation of fatty acid-derived side chains. Specifically, catalyzes the desaturation of fatty acids heptanoyl-CoA (C7), nonanoyl-CoA (C9), dodecanoyl-CoA (C12) and to a lesser extent pentanoyl-CoA (C5) and hexadecanoyl-CoA (C16), and hydroxylated fatty acid hydroxynonanoyl-CoA. Also, catalyzes the desaturation fatty acid-derived side chains of ascaroside pheromones, which regulates development and behavior. Specifically, shortens ascaroside with 5-carbon omega side chain (asc-omega-C5), 7-carbon side chain (asc-C7), 9-carbon side chain (asc-C9), 11-carbon side chain (asc-C11), 13-carbon side chain (asc-C13), 15-carbon side chain (asc-C15) and to a lesser extent ascarosides with 7-omega-carbon side chain (asc-omega-C7). Also shortens indol-3-carbonyl(IC)-ascarosides with 7-carbon side chain (IC-asc-C7) and to a lesser extent (IC)-ascarosides with 9-carbon side chain (IC-asc-C9). May associate and regulate the folding and/or the catalytic activity of other acyl-coenzyme A oxidases including acox-1.2, acox-1.3, acox-1.4 and acox-3 modulating the type of ascarosides produced. In association with acox-1.3, catalyzes the desaturation of asc-C7-CoA but not of fatty acids or hydroxylated fatty acids. Involved in the biosynthesis of asc-C6-MK (daumone 2) and asc-delta-C9 (daumone 3) but not asc-C7 (daumone 1); daumones are pheromones produced during unfavourable growth conditions which promote entry into the dauer stage. In Caenorhabditis elegans, this protein is Acyl-coenzyme A oxidase acox-1.1.